A 268-amino-acid chain; its full sequence is MDRYQALFAQLEKKNQGAFVPFVTIGDPNPELSYNIMETLIEAGADALELGIPFSDPLADGPTIQGANIRALDSKTTPAICFELIAKIRSKYPETPIGLLVYANLVFANGIDDFYAKCQQAGVDSVLIADVPTNESQEFRESAIEHGIHPIFIAPPSASPETLETVAKLGGGYTYLLSRAGVTGAETKAGMPVAQLLERLNQYDAPPAILGFGISEPAQVEEAVKAGAAGAISGSATVKLIEQHQANPEALLKALTDFTSSMKAATQK.

Active-site proton acceptor residues include E49 and D60.

It belongs to the TrpA family. Tetramer of two alpha and two beta chains.

The catalysed reaction is (1S,2R)-1-C-(indol-3-yl)glycerol 3-phosphate + L-serine = D-glyceraldehyde 3-phosphate + L-tryptophan + H2O. Its pathway is amino-acid biosynthesis; L-tryptophan biosynthesis; L-tryptophan from chorismate: step 5/5. Functionally, the alpha subunit is responsible for the aldol cleavage of indoleglycerol phosphate to indole and glyceraldehyde 3-phosphate. The polypeptide is Tryptophan synthase alpha chain (Aliivibrio fischeri (strain MJ11) (Vibrio fischeri)).